Reading from the N-terminus, the 334-residue chain is Pantothenate synthetase (334 aa).

An ATP-binding site is contributed by methionine 34–histidine 41. The active-site Proton donor is the histidine 41. Glutamine 71 provides a ligand contact to (R)-pantoate. Glutamine 71 is a beta-alanine binding site. Glycine 158–aspartate 161 serves as a coordination point for ATP. Glutamine 164 is a binding site for (R)-pantoate. ATP contacts are provided by residues valine 187 and leucine 195 to arginine 198. The tract at residues proline 288–glutamate 334 is disordered. Residues alanine 313 to glutamate 334 show a composition bias toward polar residues.

The protein belongs to the pantothenate synthetase family. In terms of assembly, homodimer.

It is found in the cytoplasm. The enzyme catalyses (R)-pantoate + beta-alanine + ATP = (R)-pantothenate + AMP + diphosphate + H(+). The protein operates within cofactor biosynthesis; (R)-pantothenate biosynthesis; (R)-pantothenate from (R)-pantoate and beta-alanine: step 1/1. Its function is as follows. Catalyzes the condensation of pantoate with beta-alanine in an ATP-dependent reaction via a pantoyl-adenylate intermediate. In Nocardioides sp. (strain ATCC BAA-499 / JS614), this protein is Pantothenate synthetase.